Reading from the N-terminus, the 478-residue chain is Serine/threonine-protein phosphatase 2A activator 1 (478 aa).

The tract at residues 359 to 478 (DPSAIPPPSR…DITTKAPWAK (120 aa)) is disordered. Over residues 396 to 419 (APWATASQSTPPPSTGTAAPWATS) the composition is skewed to low complexity.

Belongs to the PTPA-type PPIase family.

It is found in the cytoplasm. The protein localises to the nucleus. The enzyme catalyses [protein]-peptidylproline (omega=180) = [protein]-peptidylproline (omega=0). Functionally, PPIases accelerate the folding of proteins. It catalyzes the cis-trans isomerization of proline imidic peptide bonds in oligopeptides. Acts as a regulatory subunit for PP2A-like phosphatases modulating their activity or substrate specificity, probably by inducing a conformational change in the catalytic subunit, a direct target of the PPIase. Can reactivate inactive phosphatase PP2A-phosphatase methylesterase complexes (PP2Ai) in presence of ATP and Mg(2+) by dissociating the inactive form from the complex. The chain is Serine/threonine-protein phosphatase 2A activator 1 (rrd1) from Aspergillus oryzae (strain ATCC 42149 / RIB 40) (Yellow koji mold).